A 498-amino-acid chain; its full sequence is Ribulose bisphosphate carboxylase large chain (498 aa).

Positions 1-2 (MS) are excised as a propeptide. Proline 3 carries the N-acetylproline modification. Lysine 14 is subject to N6,N6,N6-trimethyllysine. Asparagine 123 and threonine 173 together coordinate substrate. The active-site Proton acceptor is lysine 175. Residue lysine 177 participates in substrate binding. 3 residues coordinate Mg(2+): lysine 201, aspartate 203, and glutamate 204. Lysine 201 carries the N6-carboxylysine modification. Histidine 294 serves as the catalytic Proton acceptor. Residues arginine 295, histidine 327, and serine 379 each contribute to the substrate site. A disordered region spans residues 471 to 498 (PVDTLDPNDKKQRDNEDTLADKLFGDKG).

This sequence belongs to the RuBisCO large chain family. Type I subfamily. As to quaternary structure, heterohexadecamer of 8 large chains and 8 small chains; disulfide-linked. The disulfide link is formed within the large subunit homodimers. Requires Mg(2+) as cofactor. In terms of processing, the disulfide bond which can form in the large chain dimeric partners within the hexadecamer appears to be associated with oxidative stress and protein turnover.

It is found in the plastid. It carries out the reaction 2 (2R)-3-phosphoglycerate + 2 H(+) = D-ribulose 1,5-bisphosphate + CO2 + H2O. The enzyme catalyses D-ribulose 1,5-bisphosphate + O2 = 2-phosphoglycolate + (2R)-3-phosphoglycerate + 2 H(+). In terms of biological role, ruBisCO catalyzes two reactions: the carboxylation of D-ribulose 1,5-bisphosphate, the primary event in carbon dioxide fixation, as well as the oxidative fragmentation of the pentose substrate in the photorespiration process. Both reactions occur simultaneously and in competition at the same active site. This Cuscuta reflexa (Southern Asian dodder) protein is Ribulose bisphosphate carboxylase large chain (rbcL).